Reading from the N-terminus, the 844-residue chain is DNA mismatch repair protein MutS (844 aa).

An ATP-binding site is contributed by glycine 602 to serine 609.

The protein belongs to the DNA mismatch repair MutS family.

Its function is as follows. This protein is involved in the repair of mismatches in DNA. It is possible that it carries out the mismatch recognition step. This protein has a weak ATPase activity. The protein is DNA mismatch repair protein MutS of Streptococcus pneumoniae serotype 19F (strain G54).